A 771-amino-acid chain; its full sequence is Polyribonucleotide nucleotidyltransferase (771 aa).

Residues Asp487 and Asp493 each contribute to the Mg(2+) site. In terms of domain architecture, KH spans 554–613 (PRIETMQIDKAKIRDVIGTGGKVIREIVATTGAKVDIDDEGLIKISSSDLDQIEAARKWI). In terms of domain architecture, S1 motif spans 623 to 691 (GKIYDGKVVN…PRGKVRLSMR (69 aa)). The tract at residues 696-771 (ETGAELEDTR…QGHVPDFLKD (76 aa)) is disordered. Residues 702 to 771 (EDTRPAREPR…QGHVPDFLKD (70 aa)) are compositionally biased toward basic and acidic residues.

It belongs to the polyribonucleotide nucleotidyltransferase family. Requires Mg(2+) as cofactor.

It localises to the cytoplasm. It catalyses the reaction RNA(n+1) + phosphate = RNA(n) + a ribonucleoside 5'-diphosphate. Its function is as follows. Involved in mRNA degradation. Catalyzes the phosphorolysis of single-stranded polyribonucleotides processively in the 3'- to 5'-direction. This Sphingopyxis alaskensis (strain DSM 13593 / LMG 18877 / RB2256) (Sphingomonas alaskensis) protein is Polyribonucleotide nucleotidyltransferase.